We begin with the raw amino-acid sequence, 329 residues long: Elongation factor Ts (329 aa).

Positions 79-82 (TDFV) are involved in Mg(2+) ion dislocation from EF-Tu.

This sequence belongs to the EF-Ts family.

Its subcellular location is the cytoplasm. Associates with the EF-Tu.GDP complex and induces the exchange of GDP to GTP. It remains bound to the aminoacyl-tRNA.EF-Tu.GTP complex up to the GTP hydrolysis stage on the ribosome. This Parabacteroides distasonis (strain ATCC 8503 / DSM 20701 / CIP 104284 / JCM 5825 / NCTC 11152) protein is Elongation factor Ts.